The primary structure comprises 280 residues: MPKPYSVKLQYLVPKIALTALAGKLAHLRAGWLTTTVIRWFAKHYRVNMLEAVNPDITSYASFNDFFTRALKPGARPLADAAQLCPVDGAISQFGRIDKDQIFQAKGHHYSTTALLAGNAQMAREYENGYFATIYLSPRDYHRIHMPCDGKLLSMTYVPGDLFSVNPLTAEHVPGLFARNERVVCEFANSEGKFALVLVGATIVGSMATVWHGIVNPPRRGEIQTWHYHDQDIRLKQGEEMGRFLLGSTVVVLYPETAQLRFQPGWHPLRAVSLGEAMAQ.

Active-site charge relay system; for autoendoproteolytic cleavage activity residues include Asp-88, His-145, and Ser-248. Residue Ser-248 is the Schiff-base intermediate with substrate; via pyruvic acid; for decarboxylase activity of the active site. Ser-248 is subject to Pyruvic acid (Ser); by autocatalysis.

The protein belongs to the phosphatidylserine decarboxylase family. PSD-B subfamily. Prokaryotic type I sub-subfamily. In terms of assembly, heterodimer of a large membrane-associated beta subunit and a small pyruvoyl-containing alpha subunit. Requires pyruvate as cofactor. In terms of processing, is synthesized initially as an inactive proenzyme. Formation of the active enzyme involves a self-maturation process in which the active site pyruvoyl group is generated from an internal serine residue via an autocatalytic post-translational modification. Two non-identical subunits are generated from the proenzyme in this reaction, and the pyruvate is formed at the N-terminus of the alpha chain, which is derived from the carboxyl end of the proenzyme. The autoendoproteolytic cleavage occurs by a canonical serine protease mechanism, in which the side chain hydroxyl group of the serine supplies its oxygen atom to form the C-terminus of the beta chain, while the remainder of the serine residue undergoes an oxidative deamination to produce ammonia and the pyruvoyl prosthetic group on the alpha chain. During this reaction, the Ser that is part of the protease active site of the proenzyme becomes the pyruvoyl prosthetic group, which constitutes an essential element of the active site of the mature decarboxylase.

The protein localises to the cell membrane. The catalysed reaction is a 1,2-diacyl-sn-glycero-3-phospho-L-serine + H(+) = a 1,2-diacyl-sn-glycero-3-phosphoethanolamine + CO2. It functions in the pathway phospholipid metabolism; phosphatidylethanolamine biosynthesis; phosphatidylethanolamine from CDP-diacylglycerol: step 2/2. Catalyzes the formation of phosphatidylethanolamine (PtdEtn) from phosphatidylserine (PtdSer). The protein is Phosphatidylserine decarboxylase proenzyme of Methylobacillus flagellatus (strain ATCC 51484 / DSM 6875 / VKM B-1610 / KT).